Here is a 522-residue protein sequence, read N- to C-terminus: Kelch domain-containing protein 4 (522 aa).

The span at 1–10 shows a compositional bias: basic residues; sequence MGKKGKKEKK. The segment at 1-33 is disordered; sequence MGKKGKKEKKGRGAEKTAAKMEKKVSKRSRKEE. Over residues 11 to 24 the composition is skewed to basic and acidic residues; sequence GRGAEKTAAKMEKK. 5 Kelch repeats span residues 77 to 129, 133 to 187, 188 to 241, 243 to 289, and 308 to 361; these read ELIL…VVPQ, QLWV…AWKR, QLIL…VTPQ, GIII…MNPS, and QTLF…RRGR. 3 disordered regions span residues 346–378, 402–432, and 481–522; these read QLKG…GAGT, LAAP…PCPR, and DPET…GAED. Ser413 and Ser418 each carry phosphoserine. A Kelch 6 repeat occupies 443 to 494; that stretch reads VLYVYGGMFEAGDRQVTLSDLHCLDLHRMEAWKALVEMDPETQEWLEETDSE.

This chain is Kelch domain-containing protein 4 (KLHDC4), found in Pongo abelii (Sumatran orangutan).